The chain runs to 156 residues: Sperm acrosome-associated protein 5 (156 aa).

Positions methionine 1–alanine 18 are cleaved as a signal peptide. The region spanning lysine 19–asparagine 147 is the C-type lysozyme domain. Intrachain disulfides connect cysteine 24/cysteine 144, cysteine 48/cysteine 132, cysteine 82/cysteine 97, and cysteine 93/cysteine 111. Glutamate 53 is an active-site residue.

It belongs to the glycosyl hydrolase 22 family.

It localises to the secreted. It catalyses the reaction Hydrolysis of (1-&gt;4)-beta-linkages between N-acetylmuramic acid and N-acetyl-D-glucosamine residues in a peptidoglycan and between N-acetyl-D-glucosamine residues in chitodextrins.. This chain is Sperm acrosome-associated protein 5 (SPACA5), found in Bos taurus (Bovine).